A 272-amino-acid chain; its full sequence is Orotidine 5'-phosphate decarboxylase (272 aa).

The active-site Proton donor is the Lys93.

This sequence belongs to the OMP decarboxylase family. Type 2 subfamily.

The catalysed reaction is orotidine 5'-phosphate + H(+) = UMP + CO2. Its pathway is pyrimidine metabolism; UMP biosynthesis via de novo pathway; UMP from orotate: step 2/2. The chain is Orotidine 5'-phosphate decarboxylase from Roseiflexus sp. (strain RS-1).